The sequence spans 1190 residues: DNA-directed RNA polymerase subunit beta (1190 aa).

It belongs to the RNA polymerase beta chain family. In terms of assembly, the RNAP catalytic core consists of 2 alpha, 1 beta, 1 beta' and 1 omega subunit. When a sigma factor is associated with the core the holoenzyme is formed, which can initiate transcription.

It carries out the reaction RNA(n) + a ribonucleoside 5'-triphosphate = RNA(n+1) + diphosphate. Its function is as follows. DNA-dependent RNA polymerase catalyzes the transcription of DNA into RNA using the four ribonucleoside triphosphates as substrates. The protein is DNA-directed RNA polymerase subunit beta of Streptococcus suis (strain 98HAH33).